Here is a 301-residue protein sequence, read N- to C-terminus: Acetylglutamate kinase (301 aa).

Residues 72-73 (GG), Arg-94, and Asn-199 each bind substrate.

It belongs to the acetylglutamate kinase family. ArgB subfamily.

The protein localises to the cytoplasm. It carries out the reaction N-acetyl-L-glutamate + ATP = N-acetyl-L-glutamyl 5-phosphate + ADP. The protein operates within amino-acid biosynthesis; L-arginine biosynthesis; N(2)-acetyl-L-ornithine from L-glutamate: step 2/4. In terms of biological role, catalyzes the ATP-dependent phosphorylation of N-acetyl-L-glutamate. The chain is Acetylglutamate kinase from Bartonella bacilliformis (strain ATCC 35685 / KC583 / Herrer 020/F12,63).